The chain runs to 57 residues: Putative secreted protein ML2569.1 (57 aa).

Residues 1-32 form the signal peptide; the sequence is MSRIVAPAAASVVVGLLLGAATIFGMTLMVQQ. Positions 34–57 are disordered; that stretch reads TKPPLPGGDPQSSVLNRVEYGNRT.

This chain is Putative secreted protein ML2569.1, found in Mycobacterium leprae (strain TN).